We begin with the raw amino-acid sequence, 156 residues long: Small ribosomal subunit protein uS7 (156 aa).

This sequence belongs to the universal ribosomal protein uS7 family. As to quaternary structure, part of the 30S ribosomal subunit. Contacts proteins S9 and S11.

One of the primary rRNA binding proteins, it binds directly to 16S rRNA where it nucleates assembly of the head domain of the 30S subunit. Is located at the subunit interface close to the decoding center, probably blocks exit of the E-site tRNA. The chain is Small ribosomal subunit protein uS7 from Streptococcus agalactiae serotype Ia (strain ATCC 27591 / A909 / CDC SS700).